The primary structure comprises 422 residues: Solute carrier family 35 member D3 (422 aa).

10 consecutive transmembrane segments (helical) span residues 9 to 29 (VLGI…NILL), 38 to 58 (FSFL…SLEL), 64 to 84 (LIAV…VAVL), 103 to 123 (MYVV…VLVL), 131 to 151 (GVLA…AGDL), 155 to 175 (PIGY…LVLI), 187 to 207 (LTAQ…CSFA), 224 to 244 (AMVS…FTTL), 257 to 277 (FVGV…FSDV), and 280 to 300 (TSLF…YCVA). The interval 339–365 (AKSGNSEPESAEGAGDSVQQGGQESRG) is disordered. Positions 355 to 364 (SVQQGGQESR) are enriched in polar residues.

It belongs to the TPT transporter family. SLC35D subfamily. Could interact with ATG14, BECN1 and PIK3C3 that form the PI3KC3-C1/AIC/autophagy initiation complex; enhancing the formation of the AIC and promoting autophagy. As to expression, expressed in brain. Expressed in subsets of dopaminergic neurons. Expressed in maturing megakaryocytes.

It is found in the cytoplasmic vesicle. The protein resides in the secretory vesicle. The protein localises to the synaptic vesicle membrane. It localises to the early endosome membrane. Its subcellular location is the endoplasmic reticulum membrane. It carries out the reaction UDP-alpha-D-glucose(in) = UDP-alpha-D-glucose(out). Inhibited by proton uncouplers that directly abolish the proton electrochemical gradient. In terms of biological role, probable UDP-glucose transmembrane transporter involved in UDP-glucose transport from the cytosol to the lumen of synaptic vesicles. It is involved in platelet dense granules maturation. Functionally, alternatively, could function as a molecular adapter enhancing the formation of the PI3KC3-C1/AIC/autophagy initiation complex to promote autophagy in dopaminergic neurons. Could also regulate the plasma membrane localization of the D(1A) dopamine receptor/DRD1 and dopamine signaling. In Mus musculus (Mouse), this protein is Solute carrier family 35 member D3.